The primary structure comprises 121 residues: Small ribosomal subunit protein uS13 (121 aa).

Residues Gly94 to Lys121 are disordered. Residues Ser106 to Lys121 show a composition bias toward basic residues.

The protein belongs to the universal ribosomal protein uS13 family. In terms of assembly, part of the 30S ribosomal subunit. Forms a loose heterodimer with protein S19. Forms two bridges to the 50S subunit in the 70S ribosome.

Functionally, located at the top of the head of the 30S subunit, it contacts several helices of the 16S rRNA. In the 70S ribosome it contacts the 23S rRNA (bridge B1a) and protein L5 of the 50S subunit (bridge B1b), connecting the 2 subunits; these bridges are implicated in subunit movement. Contacts the tRNAs in the A and P-sites. The protein is Small ribosomal subunit protein uS13 of Exiguobacterium sibiricum (strain DSM 17290 / CCUG 55495 / CIP 109462 / JCM 13490 / 255-15).